The following is a 180-amino-acid chain: MYKLIKARSIVRIPPNEFGKPLNEIALNELRQQYQEKILKDLGLVLAILNVKTSEEGILVFGDGATYHEVEFDMITYVPVVQEVVEGEVLQVDNYGIFVNLGPMDGLVHISQITDDTLKYDNVRGIIFGEKSKKVIQKGDKVRARVISVASTVTGRLPRIALTMRQPYLGKLEWITQTKK.

Positions 82–165 (QEVVEGEVLQ…RLPRIALTMR (84 aa)) constitute an S1 motif domain.

This sequence belongs to the eukaryotic RPB7/RPC8 RNA polymerase subunit family. As to quaternary structure, part of the 13-subunit RNA polymerase complex. Forms a stalk with Rpo4 that extends from the main structure.

It localises to the cytoplasm. The catalysed reaction is RNA(n) + a ribonucleoside 5'-triphosphate = RNA(n+1) + diphosphate. Functionally, DNA-dependent RNA polymerase (RNAP) catalyzes the transcription of DNA into RNA using the four ribonucleoside triphosphates as substrates. This Saccharolobus solfataricus (strain ATCC 35092 / DSM 1617 / JCM 11322 / P2) (Sulfolobus solfataricus) protein is DNA-directed RNA polymerase subunit Rpo7.